The primary structure comprises 444 residues: 3-isopropylmalate dehydratase large subunit (444 aa).

Residues residue 348, cysteine 408, and residue 411 each contribute to the [4Fe-4S] cluster site. Residues 423–444 are disordered; that stretch reads ERXXSHSNRNFEGRQGRGGRTH.

The protein belongs to the aconitase/IPM isomerase family. LeuC type 1 subfamily. Heterodimer of LeuC and LeuD. [4Fe-4S] cluster is required as a cofactor.

The enzyme catalyses (2R,3S)-3-isopropylmalate = (2S)-2-isopropylmalate. Its pathway is amino-acid biosynthesis; L-leucine biosynthesis; L-leucine from 3-methyl-2-oxobutanoate: step 2/4. Functionally, catalyzes the isomerization between 2-isopropylmalate and 3-isopropylmalate, via the formation of 2-isopropylmaleate. This is 3-isopropylmalate dehydratase large subunit from Buchnera aphidicola subsp. Uroleucon rudbeckiae.